The primary structure comprises 378 residues: Succinyl-diaminopimelate desuccinylase (378 aa).

H68 lines the Zn(2+) pocket. The active site involves D70. Zn(2+) is bound at residue D101. E135 functions as the Proton acceptor in the catalytic mechanism. Zn(2+) contacts are provided by E136, E164, and H350.

The protein belongs to the peptidase M20A family. DapE subfamily. In terms of assembly, homodimer. The cofactor is Zn(2+). Co(2+) is required as a cofactor.

It carries out the reaction N-succinyl-(2S,6S)-2,6-diaminopimelate + H2O = (2S,6S)-2,6-diaminopimelate + succinate. The protein operates within amino-acid biosynthesis; L-lysine biosynthesis via DAP pathway; LL-2,6-diaminopimelate from (S)-tetrahydrodipicolinate (succinylase route): step 3/3. Functionally, catalyzes the hydrolysis of N-succinyl-L,L-diaminopimelic acid (SDAP), forming succinate and LL-2,6-diaminopimelate (DAP), an intermediate involved in the bacterial biosynthesis of lysine and meso-diaminopimelic acid, an essential component of bacterial cell walls. The polypeptide is Succinyl-diaminopimelate desuccinylase (Acinetobacter baumannii (strain ACICU)).